The chain runs to 95 residues: Putative regulatory protein Pmob_0099 (95 aa).

The protein belongs to the RemA family.

The sequence is that of Putative regulatory protein Pmob_0099 from Petrotoga mobilis (strain DSM 10674 / SJ95).